Here is a 567-residue protein sequence, read N- to C-terminus: MAQEYDYIIVGAGSAGNTLATRLTEDEGVTVLLLEAGGPDYRFDFRTQMPAALAFPLQGRRYNWAYETDPEPHMNGRRMECGRGKGLGGSSLINGMCYIRGNAMDYDGWAKLPGLEDWTYLDCLPYFRKAETRDIGPNDYHGGEGPVSVTTPKAGNNPLFHAMVEAGVQAGYPRTEDLNGYQQEGFGPMDRTVTPKGRRASTARGYLDTAKKRSTLTIVTHALTDKILFEGKRAVGVSYLQGSTEERVEARARKEVIVSSGAIASPQLLQRSGVGPRALLESLDIPVVHDLPGVGENLQDHLELYLQYACTQPVSLYPSLLWWNQPAIGAEWLFNGTGIGASNQFEAGGFIRTREEFEWPNIQYHFLPVAINYNGSNGVKEHGFQAHMGSMRSPSRGRVQLKSKDPRQHPSILFNYMATEQDWQEFRDGIRLTREIMQQPALDPFRGREISPGIEVQTDEQLDKFVREHAETAFHPSCSCKMGTDDMAVVDGQGRVHGMQGLRVVDASIMPIITTGNLNAPTIMMAEKIADKIRGRQPLPRSTAAYYVAGEAPVRGKPMRDVTPAAQ.

FAD is bound at residue 6–35; it reads DYIIVGAGSAGNTLATRLTEDEGVTVLLLE. The segment at 182-203 is disordered; the sequence is QQEGFGPMDRTVTPKGRRASTA. The active-site Proton acceptor is the histidine 475.

This sequence belongs to the GMC oxidoreductase family. Requires FAD as cofactor.

The catalysed reaction is choline + A = betaine aldehyde + AH2. The enzyme catalyses betaine aldehyde + NAD(+) + H2O = glycine betaine + NADH + 2 H(+). The protein operates within amine and polyamine biosynthesis; betaine biosynthesis via choline pathway; betaine aldehyde from choline (cytochrome c reductase route): step 1/1. Functionally, involved in the biosynthesis of the osmoprotectant glycine betaine. Catalyzes the oxidation of choline to betaine aldehyde and betaine aldehyde to glycine betaine at the same rate. The protein is Oxygen-dependent choline dehydrogenase of Pseudomonas fluorescens (strain ATCC BAA-477 / NRRL B-23932 / Pf-5).